Reading from the N-terminus, the 507-residue chain is Cytochrome P450 monooxygenase helB3 (507 aa).

An N-terminal signal peptide occupies residues 1–25; it reads MAVATLISILFAVLALRLCYLLIHA. N-linked (GlcNAc...) asparagine glycosylation is found at Asn-111, Asn-206, and Asn-339. Cys-435 contributes to the heme binding site.

The protein belongs to the cytochrome P450 family. It depends on heme as a cofactor.

It functions in the pathway mycotoxin biosynthesis. Cytochrome P450 monooxygenase; part of the gene cluster that mediates the biosynthesis of helvolic acid, an antibacterial nortriterpenoid. Protostadienol synthase helA cyclizes (3S)-oxidosqualene to (17Z)-protosta-17(20),24-dien-3-beta-ol (protostadienol). The synthesis of protostadienol is followed by several steps of monooxygenation, dehydrogenation, and acyl transfer to yield the final helvolic acid. Following the cyclization to the tetracyclic protostadienol by helA, cytochrome P450 monooxygenases helB1-mediated and helB2-mediated oxidation at C-4 and C-16, acyltransferase helD2-dependent acetylation of 16-OH, oxidation of C-21 by cytochrome P450 monooxygenase helB4, and short chain dehydrogenase helC-dependent oxidative decarboxylation yield the fusidane skeleton. This intermediate is further modified in three additional steps mediated by the cytochrome P450 monooxygenase helB3, the acyltransferase helD1, and the 3-ketosteroid 1-dehydrogenase helE to give helvolic acid. Compared with the late stages in the biosynthesis of helvolic acid, enzymes involved in the early stage modifications act in a relatively strict order. The hydroxylation of C-16 by helB1 and subsequent acetylation by helD2 should occur before the helB3-mediated oxidation of C-21. C-4 demethylation in fusidane-type antibiotics proceeds in an unusual manner though it is also achieved by oxidative decarboxylation. The methyl group at C-4 beta position is oxidized by helB1 and subsequently removed by the short chain dehydrogenase helC. This is Cytochrome P450 monooxygenase helB3 from Aspergillus fumigatus (strain ATCC MYA-4609 / CBS 101355 / FGSC A1100 / Af293) (Neosartorya fumigata).